The sequence spans 457 residues: Cysteine desulfurase (457 aa).

Pyridoxal 5'-phosphate-binding residues include Ala127, Thr128, Gln235, Ser255, and His257. Residue Lys258 is modified to N6-(pyridoxal phosphate)lysine. Thr295 is a pyridoxal 5'-phosphate binding site. The active-site Cysteine persulfide intermediate is the Cys381. Cys381 contacts [2Fe-2S] cluster. Cys381 serves as a coordination point for Zn(2+). A Cysteine persulfide modification is found at Cys381.

Belongs to the class-V pyridoxal-phosphate-dependent aminotransferase family. NifS/IscS subfamily. As to quaternary structure, homodimer. Component of the mitochondrial core iron-sulfur cluster (ISC) complex composed of NFS1, LYRM4, NDUFAB1, ISCU, FXN, and FDX2; this complex is a heterohexamer containing two copies of each monomer. Component of cyteine desulfurase complex composed of NFS1, LYRM4 and NDUFAB1; this complex contributes to the activation of cysteine desulfurase activity and NFS1 stabilization. Interacts (homodimer form) with ISCU (D-state); each monomer interacts with the C-terminal regions of each NFS1 monomer. Interacts with HSPA9. Interacts (via homodimer form) with FDX2. Interacts (via homodimer form) with FXN. Interacts with LYRM4. Component of a complex composed of FXN, NFS1, LYRM4 and ISCU. In terms of assembly, monomer. Homodimer. Oligomer. Interacts with ISCU. Component of the cysteine desulfurase complex composed of NFS1 and LYRM4; this complex contributes to the activation of cysteine desulfurase activity. Interacts with MOCS3. Pyridoxal 5'-phosphate serves as cofactor. Post-translationally, N-gluconoylated. In terms of processing, cysteine persulfide intermediate is reduced by thiol-containing molecules like glutathione and L-cysteine. Persulfide reduction is a rate-limiting step of cysteine desulfurase catalytic cycle. Predominantly expressed in heart and skeletal muscle. Also found in brain, liver and pancreas.

The protein localises to the mitochondrion. Its subcellular location is the cytoplasm. It localises to the nucleus. The protein resides in the cytoskeleton. It is found in the microtubule organizing center. The protein localises to the centrosome. The catalysed reaction is (sulfur carrier)-H + L-cysteine = (sulfur carrier)-SH + L-alanine. It carries out the reaction L-cysteinyl-[cysteine desulfurase] + L-cysteine = S-sulfanyl-L-cysteinyl-[cysteine desulfurase] + L-alanine. Its activity is regulated as follows. Active only in complex with LYRM4. Cysteine desulfurase, of the core iron-sulfur cluster (ISC) assembly complex, that catalyzes the desulfuration of L-cysteine to L-alanine, as component of the cysteine desulfurase complex, leading to the formation of a cysteine persulfide intermediate at the active site cysteine residue and participates in the [2Fe-2S] clusters assembly on the scaffolding protein ISCU. The persulfide is then transferred on the flexible Cys loop from the catalytic site of NFS1 to the surface of NFS1. After the NFS1-linked persulfide sulfur is transferred to one of the conserved Cys residues of the scaffold, a reaction assisted by FXN. The core iron-sulfur cluster (ISC) assembly complex is involved in the de novo synthesis of a [2Fe-2S] cluster, the first step of the mitochondrial iron-sulfur protein biogenesis. This process is initiated by the cysteine desulfurase complex (NFS1:LYRM4:NDUFAB1) that produces persulfide which is delivered on the scaffold protein ISCU in a FXN-dependent manner. Then this complex is stabilized by FDX2 which provides reducing equivalents to accomplish the [2Fe-2S] cluster assembly. Finally, the [2Fe-2S] cluster is transferred from ISCU to chaperone proteins, including HSCB, HSPA9 and GLRX5. In terms of biological role, may catalyze the desulfuration of L-cysteine to L-alanine as component of the cysteine desulfurase complex (NFS1:LYRM4), leading to the formation of a cysteine persulfide intermediate. Acts as a sulfur donor for MOCS3 by transferring the sulfur of the cysteine persulfide intermediate on MOCS3. In Homo sapiens (Human), this protein is Cysteine desulfurase.